Consider the following 732-residue polypeptide: Acetophenone carboxylase gamma subunit (732 aa).

This sequence belongs to the HyuA family. In terms of assembly, acetophenone carboxylase consists of five subunits; a heterooctameric subcomplex of two alpha (Apc1), two beta (Apc2), two gamma (Apc3) and two delta (Apc4) subunits assembles with the epsilon (Apc5) subunit in an unknown stoichiometry. Mg(2+) serves as cofactor. Requires Mn(2+) as cofactor.

It localises to the cytoplasm. The catalysed reaction is acetophenone + hydrogencarbonate + 2 ATP + H2O = 3-oxo-3-phenylpropanoate + 2 ADP + 2 phosphate + 2 H(+). Its activity is regulated as follows. Inhibited by zinc ions, carbamoylphosphate and beta,gamma-imido-ATP. Catalyzes the carboxylation of acetophenone to form 3-oxo-3-phenylpropanoate (benzoylacetate) in the anaerobic catabolism of ethylbenzene. Also carboxylates propiophenone at the same rate and 4-acetyl-pyridine at lower rates. The protein is Acetophenone carboxylase gamma subunit (apc3) of Aromatoleum aromaticum (strain DSM 19018 / LMG 30748 / EbN1) (Azoarcus sp. (strain EbN1)).